The following is a 340-amino-acid chain: Arginase 1, mitochondrial (340 aa).

The transit peptide at 1–24 (MGGVAAGTRWIHHVRRLSAAKVSA) directs the protein to the mitochondrion. Residues His159, Asp183, His185, and Asp187 each contribute to the Mn(2+) site. Substrate is bound by residues 185–189 (HPDIY) and 193–195 (EGN). Mn(2+)-binding residues include Asp268 and Asp270. Residue Glu311 coordinates substrate.

It belongs to the arginase family. Mn(2+) serves as cofactor.

The protein resides in the mitochondrion. The enzyme catalyses L-arginine + H2O = urea + L-ornithine. It participates in nitrogen metabolism; urea cycle; L-ornithine and urea from L-arginine: step 1/1. Catalyzes the hydrolysis of L-arginine to urea and L-ornithine. The latter can be utilized in the urea cycle or as a precursor for the synthesis of both polyamines and proline. This Oryza sativa subsp. japonica (Rice) protein is Arginase 1, mitochondrial (ARG1).